The primary structure comprises 211 residues: Outer-membrane lipoprotein carrier protein (211 aa).

The first 25 residues, 1–25 (MRAIRMLLVSALTLGSLSATLSAHA), serve as a signal peptide directing secretion.

This sequence belongs to the LolA family. As to quaternary structure, monomer.

The protein resides in the periplasm. Participates in the translocation of lipoproteins from the inner membrane to the outer membrane. Only forms a complex with a lipoprotein if the residue after the N-terminal Cys is not an aspartate (The Asp acts as a targeting signal to indicate that the lipoprotein should stay in the inner membrane). The sequence is that of Outer-membrane lipoprotein carrier protein from Pseudomonas putida (strain W619).